The sequence spans 98 residues: NADH-ubiquinone oxidoreductase chain 4L (98 aa).

A run of 3 helical transmembrane segments spans residues 1–21, 29–49, and 61–81; these read MSLVYMNIMTAFAVSLTGLLM, SLLCLEGMMLSLFIMATLMIL, and IILLVFAACEAALGLSLLVMV.

The protein belongs to the complex I subunit 4L family. As to quaternary structure, core subunit of respiratory chain NADH dehydrogenase (Complex I) which is composed of 45 different subunits.

The protein resides in the mitochondrion inner membrane. It catalyses the reaction a ubiquinone + NADH + 5 H(+)(in) = a ubiquinol + NAD(+) + 4 H(+)(out). In terms of biological role, core subunit of the mitochondrial membrane respiratory chain NADH dehydrogenase (Complex I) which catalyzes electron transfer from NADH through the respiratory chain, using ubiquinone as an electron acceptor. Part of the enzyme membrane arm which is embedded in the lipid bilayer and involved in proton translocation. The chain is NADH-ubiquinone oxidoreductase chain 4L (MT-ND4L) from Capra hircus (Goat).